The sequence spans 430 residues: Gamma-glutamyl phosphate reductase (430 aa).

Belongs to the gamma-glutamyl phosphate reductase family.

Its subcellular location is the cytoplasm. It catalyses the reaction L-glutamate 5-semialdehyde + phosphate + NADP(+) = L-glutamyl 5-phosphate + NADPH + H(+). The protein operates within amino-acid biosynthesis; L-proline biosynthesis; L-glutamate 5-semialdehyde from L-glutamate: step 2/2. Catalyzes the NADPH-dependent reduction of L-glutamate 5-phosphate into L-glutamate 5-semialdehyde and phosphate. The product spontaneously undergoes cyclization to form 1-pyrroline-5-carboxylate. This chain is Gamma-glutamyl phosphate reductase, found in Rhodopseudomonas palustris (strain BisA53).